Here is a 335-residue protein sequence, read N- to C-terminus: Tetraacyldisaccharide 4'-kinase (335 aa).

Residue 58–65 (TMGGAGKT) coordinates ATP.

This sequence belongs to the LpxK family.

It carries out the reaction a lipid A disaccharide + ATP = a lipid IVA + ADP + H(+). It participates in glycolipid biosynthesis; lipid IV(A) biosynthesis; lipid IV(A) from (3R)-3-hydroxytetradecanoyl-[acyl-carrier-protein] and UDP-N-acetyl-alpha-D-glucosamine: step 6/6. Functionally, transfers the gamma-phosphate of ATP to the 4'-position of a tetraacyldisaccharide 1-phosphate intermediate (termed DS-1-P) to form tetraacyldisaccharide 1,4'-bis-phosphate (lipid IVA). This chain is Tetraacyldisaccharide 4'-kinase, found in Caulobacter vibrioides (strain ATCC 19089 / CIP 103742 / CB 15) (Caulobacter crescentus).